The following is a 400-amino-acid chain: MKEKTIIIVGGGQAAAMAAASLRQQGFTGELHLFSDEQHLPYERPPLSKSMLLEDSPQLQSVLPAHWWQENNVHLHSGVTIKTLGRDTRELVLANGESWHWDQLFIATGAAARPLPLLDALGERCFTLRHAGDAARLREVLQPERSVVIVGAGTIGLELAASATQRGCKVTVIELAATVMGRNAPPPVQHYLLQRHQQAGVRILLNNAIEHVVDGENVELTLQSGETLRADVVIYGIGISANDQLAREANLDTANGIVIDEACRTCDPAIFAGGDVAITRLDNGALHRCESWENANNQAQIAASAMLGLPLPRLPPPWFWSDQYSDNLQFIGDMHGDDWLCRGNPETQKAIWFNLQNGVLIGAVTLNQGREIRPIRKWIQSGKTFDAKLLTDEDIALKSL.

5–36 (TIIIVGGGQAAAMAAASLRQQGFTGELHLFSD) contributes to the FAD binding site. Residue 146–174 (SVVIVGAGTIGLELAASATQRGCKVTVIE) participates in NAD(+) binding.

Belongs to the bacterial ring-hydroxylating dioxygenase ferredoxin reductase family. In terms of assembly, this dioxygenase system consists of four proteins: the two subunits of the hydroxylase component (HcaE and HcaF), a ferredoxin (HcaC) and a ferredoxin reductase (HcaD). FAD serves as cofactor.

It carries out the reaction 2 reduced [2Fe-2S]-[ferredoxin] + NAD(+) + H(+) = 2 oxidized [2Fe-2S]-[ferredoxin] + NADH. It participates in aromatic compound metabolism; 3-phenylpropanoate degradation. Its function is as follows. Part of the multicomponent 3-phenylpropionate dioxygenase, that converts 3-phenylpropionic acid (PP) and cinnamic acid (CI) into 3-phenylpropionate-dihydrodiol (PP-dihydrodiol) and cinnamic acid-dihydrodiol (CI-dihydrodiol), respectively. This Escherichia coli (strain SMS-3-5 / SECEC) protein is 3-phenylpropionate/cinnamic acid dioxygenase ferredoxin--NAD(+) reductase component.